Here is a 1082-residue protein sequence, read N- to C-terminus: RE1-silencing transcription factor (1082 aa).

Positions 32-117 (DLHELSKAEL…SLELSAVEPQ (86 aa)) are interaction with SIN3A. Residues 43–57 (APQLIMLANVALTGE) are interaction with SIN3B. Residues 140 to 413 (PVAEDKCRSS…KSKHPTCPSK (274 aa)) are interaction with ZFP90. A C2H2-type 1 zinc finger spans residues 154 to 176 (FRCKPCQYEAESEEQFVHHIRIH). The segment at 196-207 (SGSSPAEEGEFS) is required for binding to the neuron-restrictive silencer element. 7 consecutive C2H2-type zinc fingers follow at residues 211 to 235 (IRCD…HHLR), 243 to 265 (YKCI…LRNH), 271 to 293 (YTCS…VRTH), 299 to 321 (YKCE…MRTH), 327 to 350 (FKCD…RQVH), 356 to 378 (LNCP…VELH), and 384 to 407 (FNCP…KSKH). Disordered stretches follow at residues 408 to 809 (PTCP…ELSL) and 831 to 1027 (SKLL…KAGL). Basic and acidic residues predominate over residues 440-475 (EKMENEQTKTKGDVSGKKNEKPVKAVGKDASKEKKP). Positions 477–497 (SSVSVVQVTTRTRKSAVAAET) are enriched in low complexity. Basic residues predominate over residues 581 to 597 (KGTKKTPPKTKTSKKGG). The span at 630–640 (VTGSGSSQTEL) shows a compositional bias: polar residues. Composition is skewed to pro residues over residues 684–713 (YPQP…PAPP) and 729–751 (KEPP…PPPM). 2 stretches are compositionally biased toward basic and acidic residues: residues 798 to 807 (LRKDRAEKEL) and 854 to 864 (NSREETPKDQE). Over residues 900 to 909 (RVSSSEQNSA) the composition is skewed to polar residues. At serine 950 the chain carries Phosphoserine. The interaction with RCOR1 stretch occupies residues 985-1063 (EGIHSHDGSD…HLNRHLVNVY (79 aa)). The segment at 1036 to 1058 (FVCIFCDRSFRKEKDYSKHLNRH) adopts a C2H2-type 9 zinc-finger fold.

In terms of assembly, isoform 1 and isoform 2 form heterodimers. Isoform 2: Forms homodimers and homooligomers; binds to the neuron-restrictive silencer element (NRSE) as monomer. Interacts with SIN3A, SIN3B and RCOR1. Interacts with CDYL. Interacts with EHMT1 and EHMT2 only in the presence of CDYL. Part of a complex containing at least CDYL, REST, WIZ, SETB1, EHMT1 and EHMT2. Interacts (via zinc-finger DNA-binding domain) with ZFP90 (via N- and C-termini); the interaction inhibits REST repressor activity. Interacts (via C2H2-type zinc finger 5) with PRICKLE1. Interacts with FBXW11 and BTRC. Interacts with USP7. In terms of processing, O-glycosylated. Post-translationally, phosphorylated; phosphorylation is required for ubiquitination. Ubiquitinated; ubiquitination is mediated by BTRC and leads to proteasomal degradation in G2 phase. Ubiquitination increases during neuronal differentiation. Deubiquitinated by USP7; leading to its stabilization and promoting the maintenance of neural progenitor cells. As to expression, expressed in the hippocampus, including quiescent neuronal progenitor (QNP) cells, transient-amplifying progenitor (TAP) cells, neuroblasts and mature neurons (at protein level). Expressed in embryonic stem cells (at protein level). Expressed in many non-neuronal tissues including the heart and liver. Abundantly expressed in osteoblastic lineage cells. Expressed in the spleen, kidney, blood cells, cortex, neocortex and in the utricle, saccule and organ of Corti of the inner ear. Isoform 2: Expressed in the cortex, neocortex and in the utricle, saccule and organ of Corti of the inner ear.

It is found in the nucleus. The protein resides in the cytoplasm. In terms of biological role, transcriptional repressor which binds neuron-restrictive silencer element (NRSE) and represses neuronal gene transcription in non-neuronal cells. Restricts the expression of neuronal genes by associating with two distinct corepressors, SIN3A and RCOR1, which in turn recruit histone deacetylase to the promoters of REST-regulated genes. Mediates repression by recruiting the BHC complex at RE1/NRSE sites which acts by deacetylating and demethylating specific sites on histones, thereby acting as a chromatin modifier. Transcriptional repression by REST-CDYL via the recruitment of histone methyltransferase EHMT2 may be important in transformation suppression. Represses the expression of SRRM4 in non-neural cells to prevent the activation of neural-specific splicing events and to prevent production of REST isoform 2. Repressor activity may be inhibited by forming heterodimers with isoform 2, thereby preventing binding to NRSE or binding to corepressors and leading to derepression of target genes. Also maintains repression of neuronal genes in neural stem cells, and allows transcription and differentiation into neurons by dissociation from RE1/NRSE sites of target genes. Thereby is involved in maintaining the quiescent state of adult neural stem cells and preventing premature differentiation into mature neurons. Plays a role in the developmental switch in synaptic NMDA receptor composition during postnatal development, by repressing GRIN2B expression and thereby altering NMDA receptor properties from containing primarily GRIN2B to primarily GRIN2A subunits. Acts as a regulator of osteoblast differentiation. Key repressor of gene expression in hypoxia; represses genes in hypoxia by direct binding to an RE1/NRSE site on their promoter regions. May also function in stress resistance in the brain during aging; possibly by regulating expression of genes involved in cell death and in the stress response. Repressor of gene expression in the hippocampus after ischemia by directly binding to RE1/NRSE sites and recruiting SIN3A and RCOR1 to promoters of target genes, thereby promoting changes in chromatin modifications and ischemia-induced cell death. After ischemia, might play a role in repression of miR-132 expression in hippocampal neurons, thereby leading to neuronal cell death. Functionally, binds to the 3' region of the neuron-restrictive silencer element (NRSE), with lower affinity than isoform 1. Exhibits weaker repressor activity compared to isoform 1. May negatively regulate the repressor activity of isoform 1 by binding to isoform 1, thereby preventing its binding to NRSE and leading to derepression of target genes. However, in another study, does not appear to be implicated in repressor activity of a NRSE motif-containing reporter construct nor in inhibitory activity on the isoform 1 transcriptional repressor activity. Post-transcriptional inactivation of REST by SRRM4-dependent alternative splicing into isoform 2 is required in mechanosensory hair cells in the inner ear for derepression of neuronal genes, maintenance of hair cells and hearing. This Mus musculus (Mouse) protein is RE1-silencing transcription factor (Rest).